Reading from the N-terminus, the 442-residue chain is Urokinase-type plasminogen activator (442 aa).

An N-terminal signal peptide occupies residues Met1–Gly20. The EGF-like domain maps to Gly29–Glu65. 12 disulfides stabilise this stretch: Cys33-Cys41, Cys35-Cys53, Cys55-Cys64, Cys72-Cys153, Cys93-Cys135, Cys124-Cys148, Cys179-Cys310, Cys220-Cys236, Cys228-Cys299, Cys324-Cys393, Cys356-Cys372, and Cys383-Cys411. The interval Leu36–Phe59 is binds urokinase plasminogen activator surface receptor. The Kringle domain maps to Cys72–Cys153. N-linked (GlcNAc...) asparagine glycosylation occurs at Asn152. The tract at residues Ser154–Lys189 is connecting peptide. In terms of domain architecture, Peptidase S1 spans Ile190 to Gly435. Catalysis depends on charge relay system residues His235 and Asp286. Ser387 (charge relay system) is an active-site residue.

It belongs to the peptidase S1 family. As to quaternary structure, found in high and low molecular mass forms. Each consists of two chains, A and B. The high molecular mass form contains a long chain A which is cleaved to yield a short chain A. Forms heterodimer with SERPINA5. Binds LRP1B; binding is followed by internalization and degradation. Interacts with MRC2. Interacts with PLAUR. In complex with SERPINE1, interacts with PLAUR/uPAR. Interacts with SORL1 and LRP1, either alone or in complex with SERPINE1; these interactions are abolished in the presence of LRPAP1/RAP. The ternary complex composed of PLAUR-PLAU-PAI1 also interacts with SORLA. In terms of processing, produced as an inactive single-chain protein (pro-uPA or sc-uPA), is processed into the active disulfide-linked two-chain form of PLAU/uPA by a proteolytic event mediated, at least, by TMPRSS4.

Its subcellular location is the secreted. It carries out the reaction Specific cleavage of Arg-|-Val bond in plasminogen to form plasmin.. With respect to regulation, inhibited by SERPINA5. Inhibited by SERPINE1. Specifically cleaves the zymogen plasminogen to form the active enzyme plasmin. This chain is Urokinase-type plasminogen activator (PLAU), found in Sus scrofa (Pig).